The sequence spans 216 residues: Acyl-homoserine-lactone synthase (216 aa).

Belongs to the autoinducer synthase family.

It carries out the reaction a fatty acyl-[ACP] + S-adenosyl-L-methionine = an N-acyl-L-homoserine lactone + S-methyl-5'-thioadenosine + holo-[ACP] + H(+). Functionally, required for the synthesis of an acyl-HSL autoinducer that binds to YukR and which is involved in the regulation of motility and morphology. The protein is Acyl-homoserine-lactone synthase (yukI) of Yersinia ruckeri.